A 247-amino-acid chain; its full sequence is Probable transcriptional regulatory protein plu2109 (247 aa).

The protein belongs to the TACO1 family.

It is found in the cytoplasm. This is Probable transcriptional regulatory protein plu2109 from Photorhabdus laumondii subsp. laumondii (strain DSM 15139 / CIP 105565 / TT01) (Photorhabdus luminescens subsp. laumondii).